The primary structure comprises 230 residues: Uracil phosphoribosyltransferase (230 aa).

38–42 (KGLVK) contributes to the GTP binding site. 5-phospho-alpha-D-ribose 1-diphosphate contacts are provided by residues Arg87, Arg112, and 140–148 (DPMIATGST). Residues Ile204 and 209-211 (GDA) contribute to the uracil site. Asp210 contributes to the 5-phospho-alpha-D-ribose 1-diphosphate binding site.

Belongs to the UPRTase family. Mg(2+) is required as a cofactor.

It carries out the reaction UMP + diphosphate = 5-phospho-alpha-D-ribose 1-diphosphate + uracil. Its pathway is pyrimidine metabolism; UMP biosynthesis via salvage pathway; UMP from uracil: step 1/1. With respect to regulation, allosterically activated by GTP. Its function is as follows. Catalyzes the conversion of uracil and 5-phospho-alpha-D-ribose 1-diphosphate (PRPP) to UMP and diphosphate. The polypeptide is Uracil phosphoribosyltransferase (Thermococcus kodakarensis (strain ATCC BAA-918 / JCM 12380 / KOD1) (Pyrococcus kodakaraensis (strain KOD1))).